Reading from the N-terminus, the 689-residue chain is Glycine--tRNA ligase beta subunit (689 aa).

The protein belongs to the class-II aminoacyl-tRNA synthetase family. As to quaternary structure, tetramer of two alpha and two beta subunits.

It localises to the cytoplasm. The catalysed reaction is tRNA(Gly) + glycine + ATP = glycyl-tRNA(Gly) + AMP + diphosphate. In Hamiltonella defensa subsp. Acyrthosiphon pisum (strain 5AT), this protein is Glycine--tRNA ligase beta subunit.